The sequence spans 111 residues: Probable 4-amino-4-deoxy-L-arabinose-phosphoundecaprenol flippase subunit ArnE (111 aa).

The Cytoplasmic portion of the chain corresponds to 1–37; sequence MIWLVLILASLLSVTGQLCQKQATRPVAINKRRKHIA. A helical membrane pass occupies residues 38 to 58; the sequence is LWLGLGLVCLGLAMVLWLLVL. Residues 40–109 form the EamA domain; the sequence is LGLGLVCLGL…IIGGIVILGS (70 aa). The Periplasmic segment spans residues 59–60; it reads QT. Residues 61 to 81 traverse the membrane as a helical segment; sequence VPVGIAYPMLSLNFVWVTLAA. Topologically, residues 82-87 are cytoplasmic; sequence TKLWHE. A helical membrane pass occupies residues 88-108; it reads PVSFRHWCGVAFIIGGIVILG. The Periplasmic portion of the chain corresponds to 109–111; the sequence is STV.

This sequence belongs to the ArnE family. Heterodimer of ArnE and ArnF.

It is found in the cell inner membrane. It functions in the pathway bacterial outer membrane biogenesis; lipopolysaccharide biosynthesis. Translocates 4-amino-4-deoxy-L-arabinose-phosphoundecaprenol (alpha-L-Ara4N-phosphoundecaprenol) from the cytoplasmic to the periplasmic side of the inner membrane. This Escherichia fergusonii (strain ATCC 35469 / DSM 13698 / CCUG 18766 / IAM 14443 / JCM 21226 / LMG 7866 / NBRC 102419 / NCTC 12128 / CDC 0568-73) protein is Probable 4-amino-4-deoxy-L-arabinose-phosphoundecaprenol flippase subunit ArnE.